The primary structure comprises 294 residues: tRNA pseudouridine synthase B (294 aa).

Asp39 serves as the catalytic Nucleophile.

Belongs to the pseudouridine synthase TruB family. Type 1 subfamily.

The catalysed reaction is uridine(55) in tRNA = pseudouridine(55) in tRNA. In terms of biological role, responsible for synthesis of pseudouridine from uracil-55 in the psi GC loop of transfer RNAs. The chain is tRNA pseudouridine synthase B from Streptococcus pyogenes serotype M2 (strain MGAS10270).